A 545-amino-acid chain; its full sequence is Membrane protein insertase YidC (545 aa).

Helical transmembrane passes span isoleucine 350–tyrosine 370, leucine 424–valine 444, alanine 461–leucine 481, and proline 498–valine 518.

This sequence belongs to the OXA1/ALB3/YidC family. Type 1 subfamily. As to quaternary structure, interacts with the Sec translocase complex via SecD. Specifically interacts with transmembrane segments of nascent integral membrane proteins during membrane integration.

Its subcellular location is the cell inner membrane. Functionally, required for the insertion and/or proper folding and/or complex formation of integral membrane proteins into the membrane. Involved in integration of membrane proteins that insert both dependently and independently of the Sec translocase complex, as well as at least some lipoproteins. Aids folding of multispanning membrane proteins. The sequence is that of Membrane protein insertase YidC from Neisseria meningitidis serogroup B (strain ATCC BAA-335 / MC58).